A 981-amino-acid chain; its full sequence is Beta-glucuronidase (981 aa).

The active-site Nucleophile is the Glu500. Mg(2+) contacts are provided by Asn561, Trp562, Ile563, Ser581, and Glu583.

The protein belongs to the glycosyl hydrolase 2 family.

The protein resides in the periplasm. The catalysed reaction is a beta-D-glucuronoside + H2O = D-glucuronate + an alcohol. In terms of biological role, beta-glucuronidase involved in ulvan degradation. Ulvan is the main polysaccharide component of the Ulvales (green seaweed) cell wall. It is composed of disaccharide building blocks comprising 3-sulfated rhamnose (Rha3S) linked to D-glucuronic acid (GlcA), L-iduronic acid (IduA), or D-xylose (Xyl). Beta-glucuronidase removes GlcA side chains present on some O2 residues of Rha3S. Can remove the GlcA side chains from polymeric ulvan or from smaller oligomers. This Formosa agariphila (strain DSM 15362 / KCTC 12365 / LMG 23005 / KMM 3901 / M-2Alg 35-1) protein is Beta-glucuronidase.